Consider the following 310-residue polypeptide: Acetyl-coenzyme A carboxylase carboxyl transferase subunit beta (310 aa).

In terms of domain architecture, CoA carboxyltransferase N-terminal spans 27-296 (LWRKCPNCEA…QDRDAEPDDT (270 aa)). Residues Cys-31, Cys-34, Cys-50, and Cys-53 each coordinate Zn(2+). The segment at 31–53 (CPNCEAVLYLPELERHQSVCPKC) adopts a C4-type zinc-finger fold. A disordered region spans residues 282–310 (THQPHQDRDAEPDDTASQSTLDEFSQADH).

It belongs to the AccD/PCCB family. In terms of assembly, acetyl-CoA carboxylase is a heterohexamer composed of biotin carboxyl carrier protein (AccB), biotin carboxylase (AccC) and two subunits each of ACCase subunit alpha (AccA) and ACCase subunit beta (AccD). Requires Zn(2+) as cofactor.

It is found in the cytoplasm. The catalysed reaction is N(6)-carboxybiotinyl-L-lysyl-[protein] + acetyl-CoA = N(6)-biotinyl-L-lysyl-[protein] + malonyl-CoA. It functions in the pathway lipid metabolism; malonyl-CoA biosynthesis; malonyl-CoA from acetyl-CoA: step 1/1. Its function is as follows. Component of the acetyl coenzyme A carboxylase (ACC) complex. Biotin carboxylase (BC) catalyzes the carboxylation of biotin on its carrier protein (BCCP) and then the CO(2) group is transferred by the transcarboxylase to acetyl-CoA to form malonyl-CoA. In Chromohalobacter salexigens (strain ATCC BAA-138 / DSM 3043 / CIP 106854 / NCIMB 13768 / 1H11), this protein is Acetyl-coenzyme A carboxylase carboxyl transferase subunit beta.